The primary structure comprises 37 residues: uncharacterized protein (37 aa).

The N-terminal stretch at 1 to 23 is a signal peptide; sequence MLNFSLCLYPVFILNKLVLRTQS.

This sequence belongs to the orthopoxviruses VACWR204.5 protein family.

This is an uncharacterized protein from Vaccinia virus (strain Western Reserve) (VACV).